The sequence spans 325 residues: uncharacterized protein (325 aa).

The 103-residue stretch at 49 to 151 (RYEHSIGVML…ELCADRTDYT (103 aa)) folds into the HD domain.

This is an uncharacterized protein from Bacillus subtilis (strain 168).